The following is a 301-amino-acid chain: Tyrosine recombinase XerC (301 aa).

Residues 1-85 (MELISLFKQY…ALRSFYRFLV (85 aa)) form the Core-binding (CB) domain. One can recognise a Tyr recombinase domain in the interval 106 to 292 (KLPHFFYEKE…TKEKLQESYR (187 aa)). Residues Arg147, Lys171, His244, Arg247, and His270 contribute to the active site. Residue Tyr279 is the O-(3'-phospho-DNA)-tyrosine intermediate of the active site.

Belongs to the 'phage' integrase family. XerC subfamily. In terms of assembly, forms a cyclic heterotetrameric complex composed of two molecules of XerC and two molecules of XerD.

Its subcellular location is the cytoplasm. In terms of biological role, site-specific tyrosine recombinase, which acts by catalyzing the cutting and rejoining of the recombining DNA molecules. The XerC-XerD complex is essential to convert dimers of the bacterial chromosome into monomers to permit their segregation at cell division. It also contributes to the segregational stability of plasmids. This Pediococcus pentosaceus (strain ATCC 25745 / CCUG 21536 / LMG 10740 / 183-1w) protein is Tyrosine recombinase XerC.